We begin with the raw amino-acid sequence, 307 residues long: MSSSDHIHVPDGLAESYSRSGGEEGRAWIAGLPALVARCVDRWELKRDGGVRSGEASLVVPVLRADGTRAALKLQMPREETTAALIGLRAWGGDGMVRLLDHDEESSTMLLERLDGSRTLASVEDDDEAMGVLAGLLNRLHSVPAPPGLRGLGEIAGAMVEEVPSAVDSLADPEDRSRLRGWASAVAELVGEPGDRVLHWDLHYENVLAAEREPWLAIDPEPLVGDPGFDLWPALDTGWERIEATGDARRVVRRRFDLLTESLELDRGRAAGWTLARLLQNTLWDIEDGLTAIAPSQIAVAEALAKP.

Position 133-145 (133-145 (LAGLLNRLHSVPA)) interacts with streptomycin. Catalysis depends on D201, which acts as the Proton acceptor.

It belongs to the aminoglycoside phosphotransferase family.

The enzyme catalyses streptomycin + ATP = streptomycin 6-phosphate + ADP + H(+). In terms of biological role, the aminoglycoside phosphotransferases achieve inactivation of their antibiotic substrates by phosphorylation. This Streptomyces griseus protein is Streptomycin 6-kinase (aphD).